The sequence spans 92 residues: RNA-binding protein Hfq (92 aa).

Residues 9–68 (DPFLNALRRERVPVSIYLVNGIKLQGQVESFDQFVILLKNTVSQMVYKHAISTVVPSRPF) form the Sm domain.

This sequence belongs to the Hfq family. As to quaternary structure, homohexamer.

In terms of biological role, RNA chaperone that binds small regulatory RNA (sRNAs) and mRNAs to facilitate mRNA translational regulation in response to envelope stress, environmental stress and changes in metabolite concentrations. Also binds with high specificity to tRNAs. This Shewanella piezotolerans (strain WP3 / JCM 13877) protein is RNA-binding protein Hfq.